The chain runs to 1523 residues: Slit homolog 3 protein (1523 aa).

A signal peptide spans 1–33 (MALGRTGAGAAVRARLALGLALASILSGPPAAA). The 28-residue stretch at 34–61 (CPTKCTCSAASVDCHGLGLRAVPRGIPR) folds into the LRRNT domain. 6 LRR repeats span residues 62–83 (NAER…DFAG), 86–107 (NLRV…AFQD), 110–131 (QLER…LFQS), 134–155 (KLTR…AFRG), 158–179 (GVKN…AFRA), and 182–203 (DLEI…SFNH). An N-linked (GlcNAc...) asparagine glycan is attached at Asn72. A glycan (N-linked (GlcNAc...) asparagine) is linked at Asn192. An LRRCT 1 domain is found at 215–265 (NHLYCDCHLAWLSDWLRQRRTIGQFTLCMAPVHLRGFSVADVQKKEYVCPG). Positions 271-307 (PACNANSLSCPSACSCSNNIVDCRGKGLTEIPANLPE) constitute an LRRNT 2 domain. A disulfide bond links Cys284 and Cys293. LRR repeat units follow at residues 308–329 (GIVE…AFTQ), 332–353 (KLKR…AFQG), 356–377 (SLTS…LFDG), 380–401 (SLQL…TFQD), and 404–425 (NLNL…LFVP). The 51-residue stretch at 437 to 487 (NPFVCDCHLKWLADYLQDNPIETSGARCSSPRRLANKRISQIKSKKFRCSG) folds into the LRRCT 2 domain. Disulfide bonds link Cys441/Cys464, Cys443/Cys485, Cys505/Cys511, and Cys509/Cys518. Positions 496–532 (SSECFMDLVCPEKCRCEGTIVDCSNQKLARIPSHLPE) constitute an LRRNT 3 domain. LRR repeat units lie at residues 533 to 554 (YTTD…GIFK), 558 to 579 (NLRK…AFDG), 582 to 603 (GVQE…MFRG), 606 to 627 (SLKT…TFAG), and 630 to 651 (SVRL…AFTT). N-linked (GlcNAc...) asparagine glycosylation occurs at Asn563. N-linked (GlcNAc...) asparagine glycosylation occurs at Asn622. In terms of domain architecture, LRRCT 3 spans 663–713 (NPFNCNCHMAWLGRWLRKRRIVSGNPRCQKPFFLKEIPIQDVAIQDFTCDG). Cystine bridges form between Cys667–Cys690 and Cys669–Cys711. An LRRNT 4 domain is found at 716-752 (ESSCQLSPRCPEQCTCVETVVRCSNRGLHALPKGMPK). LRR repeat units lie at residues 753–774 (DVTE…LSAF), 776–797 (QLTL…TFSN), 800–821 (HLST…AFNG), and 824–845 (SLRV…SFND). Asn784, Asn792, and Asn797 each carry an N-linked (GlcNAc...) asparagine glycan. One can recognise an LRRCT 4 domain in the interval 857–907 (NPLHCDCSLRWLSEWVKAGYKEPGIARCSSPESMADRLLLTTPTHRFQCKG). 6 EGF-like domains span residues 918 to 953 (NACL…KDCT), 955 to 994 (PINT…QRCE), 996 to 1032 (NPDD…ELCD), 1034 to 1072 (VIDY…KLCE), 1074 to 1110 (NNDD…LFCE), and 1119 to 1155 (QTSP…PRCE). Cystine bridges form between Cys920-Cys931, Cys925-Cys941, Cys943-Cys952, Cys959-Cys970, Cys964-Cys982, Cys984-Cys993, Cys1000-Cys1011, Cys1005-Cys1020, Cys1022-Cys1031, Cys1038-Cys1051, Cys1045-Cys1060, Cys1062-Cys1071, Cys1078-Cys1089, Cys1083-Cys1098, Cys1100-Cys1109, Cys1123-Cys1134, Cys1128-Cys1143, and Cys1145-Cys1154. Residue Asn928 is glycosylated (N-linked (GlcNAc...) asparagine). Residue Asn1025 is glycosylated (N-linked (GlcNAc...) asparagine). The 175-residue stretch at 1158-1332 (ITVNFVGKDS…PQSLGVSPGC (175 aa)) folds into the Laminin G-like domain. N-linked (GlcNAc...) asparagine glycosylation is found at Asn1181 and Asn1247. Intrachain disulfides connect Cys1305/Cys1332, Cys1355/Cys1364, Cys1372/Cys1382, Cys1377/Cys1391, and Cys1393/Cys1402. EGF-like domains are found at residues 1340 to 1365 (HGLC…PLCD) and 1368 to 1403 (ARDP…ALCD). The N-linked (GlcNAc...) asparagine glycan is linked to Asn1406. An EGF-like 9 domain is found at 1408–1444 (SASACSAFKCHHGQCHISDRGEPYCLCQPGFSGHHCE). Intrachain disulfides connect Cys1412–Cys1422, Cys1417–Cys1432, Cys1434–Cys1443, Cys1449–Cys1487, Cys1467–Cys1501, Cys1478–Cys1517, and Cys1482–Cys1519. Positions 1449–1523 (CMGEIVREAI…HLECGCRACS (75 aa)) constitute a CTCK domain.

It localises to the secreted. Its function is as follows. May act as molecular guidance cue in cellular migration, and function may be mediated by interaction with roundabout homolog receptors. This is Slit homolog 3 protein (Slit3) from Mus musculus (Mouse).